The chain runs to 613 residues: Dihydroxy-acid dehydratase (613 aa).

Asp81 contributes to the Mg(2+) binding site. Cys122 provides a ligand contact to [2Fe-2S] cluster. Asp123 and Lys124 together coordinate Mg(2+). An N6-carboxylysine modification is found at Lys124. Cys195 provides a ligand contact to [2Fe-2S] cluster. Glu491 contributes to the Mg(2+) binding site. Ser517 acts as the Proton acceptor in catalysis.

The protein belongs to the IlvD/Edd family. In terms of assembly, homodimer. [2Fe-2S] cluster serves as cofactor. The cofactor is Mg(2+).

It catalyses the reaction (2R)-2,3-dihydroxy-3-methylbutanoate = 3-methyl-2-oxobutanoate + H2O. The enzyme catalyses (2R,3R)-2,3-dihydroxy-3-methylpentanoate = (S)-3-methyl-2-oxopentanoate + H2O. It participates in amino-acid biosynthesis; L-isoleucine biosynthesis; L-isoleucine from 2-oxobutanoate: step 3/4. It functions in the pathway amino-acid biosynthesis; L-valine biosynthesis; L-valine from pyruvate: step 3/4. Its function is as follows. Functions in the biosynthesis of branched-chain amino acids. Catalyzes the dehydration of (2R,3R)-2,3-dihydroxy-3-methylpentanoate (2,3-dihydroxy-3-methylvalerate) into 2-oxo-3-methylpentanoate (2-oxo-3-methylvalerate) and of (2R)-2,3-dihydroxy-3-methylbutanoate (2,3-dihydroxyisovalerate) into 2-oxo-3-methylbutanoate (2-oxoisovalerate), the penultimate precursor to L-isoleucine and L-valine, respectively. This Buchnera aphidicola subsp. Schlechtendalia chinensis protein is Dihydroxy-acid dehydratase.